A 151-amino-acid chain; its full sequence is MSTTREKLLATTTKFVSAFGSFDIEEMLNIRTPTCLYHQCCPSFDKNVVTNEETRASFPQFIATFKRFDFSILEPDHTLVDEAARKVMIRAKTSAESIVGAYENEYIFILKMTDDCRLIEEIHEFYDTIRLKDLQHRLEANRISFGDAAPF.

Belongs to the trt14 isomerase family. In terms of assembly, homodimer.

Its pathway is secondary metabolite biosynthesis; terpenoid biosynthesis. Part of the gene cluster B that mediates the biosynthesis of the fungal meroterpenoid acetoxydehydroaustin. The first step of the pathway is the synthesis of 3,5-dimethylorsellinic acid by the polyketide synthase ausA. 3,5-dimethylorsellinic acid is then prenylated by the polyprenyl transferase ausN. Further epoxidation by the FAD-dependent monooxygenase ausM and cyclization by the probable terpene cyclase ausL lead to the formation of protoaustinoid A. Protoaustinoid A is then oxidized to spiro-lactone preaustinoid A3 by the combined action of the FAD-binding monooxygenases ausB and ausC, and the dioxygenase ausE. Acid-catalyzed keto-rearrangement and ring contraction of the tetraketide portion of preaustinoid A3 by ausJ lead to the formation of preaustinoid A4. The aldo-keto reductase ausK, with the help of ausH, is involved in the next step by transforming preaustinoid A4 into isoaustinone which is in turn hydroxylated by the P450 monooxygenase ausI to form austinolide. The cytochrome P450 monooxygenase ausG then modifies austinolide to austinol. Austinol is further acetylated to austin by the O-acetyltransferase ausP, which spontaneously changes to dehydroaustin. The cytochrome P450 monooxygenase then converts dehydroaustin is into 7-dehydrodehydroaustin. The hydroxylation catalyzed by ausR permits the second O-acetyltransferase ausQ to add an additional acetyl group to the molecule, leading to the formation of acetoxydehydroaustin. Due to genetic rearrangements of the clusters and the subsequent loss of some enzymes, the end product of the Penicillium brasilianum austinoid biosynthesis clusters is acetoxydehydroaustin. This is Austinoid biosynthesis clusters protein F from Penicillium brasilianum.